A 71-amino-acid chain; its full sequence is Large ribosomal subunit protein bL28 (71 aa).

Belongs to the bacterial ribosomal protein bL28 family.

The chain is Large ribosomal subunit protein bL28 from Rubrobacter xylanophilus (strain DSM 9941 / JCM 11954 / NBRC 16129 / PRD-1).